A 100-amino-acid polypeptide reads, in one-letter code: Urease subunit gamma (100 aa).

Belongs to the urease gamma subunit family. As to quaternary structure, heterotrimer of UreA (gamma), UreB (beta) and UreC (alpha) subunits. Three heterotrimers associate to form the active enzyme.

Its subcellular location is the cytoplasm. It catalyses the reaction urea + 2 H2O + H(+) = hydrogencarbonate + 2 NH4(+). The protein operates within nitrogen metabolism; urea degradation; CO(2) and NH(3) from urea (urease route): step 1/1. The polypeptide is Urease subunit gamma (Kocuria rhizophila (strain ATCC 9341 / DSM 348 / NBRC 103217 / DC2201)).